The sequence spans 102 residues: Small ribosomal subunit protein uS10 (102 aa).

This sequence belongs to the universal ribosomal protein uS10 family. Part of the 30S ribosomal subunit.

Functionally, involved in the binding of tRNA to the ribosomes. The protein is Small ribosomal subunit protein uS10 of Kineococcus radiotolerans (strain ATCC BAA-149 / DSM 14245 / SRS30216).